The primary structure comprises 310 residues: Malate dehydrogenase (310 aa).

NAD(+) is bound by residues 7–12 (GAGNVG) and D32. Substrate is bound by residues R81 and R87. NAD(+)-binding positions include N94 and 117–119 (VSN). 2 residues coordinate substrate: N119 and R150. H174 functions as the Proton acceptor in the catalytic mechanism.

This sequence belongs to the LDH/MDH superfamily. MDH type 3 family. In terms of assembly, homotetramer; arranged as a dimer of dimers.

The enzyme catalyses (S)-malate + NAD(+) = oxaloacetate + NADH + H(+). Its function is as follows. Catalyzes the reversible oxidation of malate to oxaloacetate. This chain is Malate dehydrogenase, found in Prosthecochloris vibrioformis (Chlorobium vibrioforme).